The sequence spans 303 residues: Pseudouridine-5'-phosphate glycosidase (303 aa).

The active-site Proton donor is the glutamate 25. Residues lysine 87 and valine 107 each coordinate substrate. Residue aspartate 139 coordinates Mn(2+). 141–143 (SAD) contacts substrate. The Nucleophile role is filled by lysine 160.

The protein belongs to the pseudouridine-5'-phosphate glycosidase family. Homotrimer. Requires Mn(2+) as cofactor.

It carries out the reaction D-ribose 5-phosphate + uracil = psi-UMP + H2O. Its function is as follows. Catalyzes the reversible cleavage of pseudouridine 5'-phosphate (PsiMP) to ribose 5-phosphate and uracil. Functions biologically in the cleavage direction, as part of a pseudouridine degradation pathway. The protein is Pseudouridine-5'-phosphate glycosidase of Hahella chejuensis (strain KCTC 2396).